A 307-amino-acid polypeptide reads, in one-letter code: 1-phosphofructokinase (307 aa).

ATP is bound by residues 217–222 (SMGSDG) and 249–250 (GD). Catalysis depends on Asp250, which acts as the Proton acceptor.

This sequence belongs to the carbohydrate kinase PfkB family.

It carries out the reaction beta-D-fructose 1-phosphate + ATP = beta-D-fructose 1,6-bisphosphate + ADP + H(+). Catalyzes the ATP-dependent phosphorylation of fructose-l-phosphate to fructose-l,6-bisphosphate. In Borreliella burgdorferi (strain ATCC 35210 / DSM 4680 / CIP 102532 / B31) (Borrelia burgdorferi), this protein is 1-phosphofructokinase (fruK).